The following is a 304-amino-acid chain: D-alanine--D-alanine ligase (304 aa).

The ATP-grasp domain maps to 100–301; the sequence is KLVALQSGIP…FGEFLEDLIK (202 aa). 129–184 is an ATP binding site; it reads ERKLGSPFIVKPCDVGSTIGLSLVRSASEYEVALEEAFRFSDRLLLEEFIDGFEVT. Residues aspartate 256, glutamate 268, and asparagine 270 each coordinate Mg(2+).

It belongs to the D-alanine--D-alanine ligase family. Mg(2+) is required as a cofactor. Mn(2+) serves as cofactor.

Its subcellular location is the cytoplasm. The catalysed reaction is 2 D-alanine + ATP = D-alanyl-D-alanine + ADP + phosphate + H(+). Its pathway is cell wall biogenesis; peptidoglycan biosynthesis. Functionally, cell wall formation. In Coprothermobacter proteolyticus (strain ATCC 35245 / DSM 5265 / OCM 4 / BT), this protein is D-alanine--D-alanine ligase.